The sequence spans 65 residues: Large ribosomal subunit protein bL31 (65 aa).

Positions 16, 18, 36, and 39 each coordinate Zn(2+).

It belongs to the bacterial ribosomal protein bL31 family. Type A subfamily. As to quaternary structure, part of the 50S ribosomal subunit. Zn(2+) serves as cofactor.

In terms of biological role, binds the 23S rRNA. The protein is Large ribosomal subunit protein bL31 of Geobacter sulfurreducens (strain ATCC 51573 / DSM 12127 / PCA).